The following is a 352-amino-acid chain: Isopentenyl-diphosphate delta-isomerase (352 aa).

6-7 contacts substrate; the sequence is RK. FMN contacts are provided by residues 63-65, S93, and N122; that span reads AMT. 93–95 contributes to the substrate binding site; the sequence is SQR. Q160 contributes to the substrate binding site. Position 161 (E161) interacts with Mg(2+). FMN is bound by residues K192, T221, 271 to 273, and 292 to 293; these read GIR and SQ.

The protein belongs to the IPP isomerase type 2 family. Homooctamer. Dimer of tetramers. Requires FMN as cofactor. NADPH is required as a cofactor. It depends on Mg(2+) as a cofactor.

Its subcellular location is the cytoplasm. The enzyme catalyses isopentenyl diphosphate = dimethylallyl diphosphate. Involved in the biosynthesis of isoprenoids. Catalyzes the 1,3-allylic rearrangement of the homoallylic substrate isopentenyl (IPP) to its allylic isomer, dimethylallyl diphosphate (DMAPP). The polypeptide is Isopentenyl-diphosphate delta-isomerase (Pyrobaculum arsenaticum (strain DSM 13514 / JCM 11321 / PZ6)).